Here is a 213-residue protein sequence, read N- to C-terminus: Uridine kinase (213 aa).

15–22 (GASASGKS) contributes to the ATP binding site.

It belongs to the uridine kinase family.

Its subcellular location is the cytoplasm. It catalyses the reaction uridine + ATP = UMP + ADP + H(+). It carries out the reaction cytidine + ATP = CMP + ADP + H(+). It participates in pyrimidine metabolism; CTP biosynthesis via salvage pathway; CTP from cytidine: step 1/3. Its pathway is pyrimidine metabolism; UMP biosynthesis via salvage pathway; UMP from uridine: step 1/1. The chain is Uridine kinase from Salmonella newport (strain SL254).